Reading from the N-terminus, the 187-residue chain is Ribosome-recycling factor (187 aa).

It belongs to the RRF family.

It localises to the cytoplasm. Its function is as follows. Responsible for the release of ribosomes from messenger RNA at the termination of protein biosynthesis. May increase the efficiency of translation by recycling ribosomes from one round of translation to another. The protein is Ribosome-recycling factor of Anaeromyxobacter sp. (strain Fw109-5).